Here is a 162-residue protein sequence, read N- to C-terminus: Probable E3 ubiquitin-protein ligase XERICO (162 aa).

A helical transmembrane segment spans residues 12–28; that stretch reads GMLCVILVNTALSISIV. The segment at 103–145 adopts an RING-type; atypical zinc-finger fold; that stretch reads CSVCLSKFQGDSEINKLKCGHLFHKTCLEKWIDYWNITCPLCR.

In terms of assembly, interacts with UBC8 and TULP9. Ubiquitous. Higher expression in actively growing tissues.

It localises to the membrane. It carries out the reaction S-ubiquitinyl-[E2 ubiquitin-conjugating enzyme]-L-cysteine + [acceptor protein]-L-lysine = [E2 ubiquitin-conjugating enzyme]-L-cysteine + N(6)-ubiquitinyl-[acceptor protein]-L-lysine.. Its pathway is protein modification; protein ubiquitination. In terms of biological role, function on abscisic acid homeostasis at post-translational level, probably through ubiquitin/proteasome-dependent substrate-specific degradation. The sequence is that of Probable E3 ubiquitin-protein ligase XERICO (XERICO) from Arabidopsis thaliana (Mouse-ear cress).